Here is a 125-residue protein sequence, read N- to C-terminus: Egg cell-secreted protein 1.3 (125 aa).

The first 24 residues, 1–24 (MASNTSFLFVTVTLLLVLNVSSRA), serve as a signal peptide directing secretion.

This sequence belongs to the plant egg cell-secreted peptide family. In terms of tissue distribution, restricted to female reproductive tissues, specifically accumulating in storage vesicles of the unfertilized egg cell.

The protein localises to the cytoplasmic vesicle. The protein resides in the secreted. In terms of biological role, involved in the regulation of gamete interactions during the double fertilization and to prevent multiple-pollen tube attraction; mediates the redistribution of the gamete fusogen HAP2/GCS1 to the cell surface after secretion upon sperm arrival. The protein is Egg cell-secreted protein 1.3 (EC1.3) of Arabidopsis thaliana (Mouse-ear cress).